Consider the following 303-residue polypeptide: Probable 5-dehydro-4-deoxyglucarate dehydratase (303 aa).

This sequence belongs to the DapA family.

The catalysed reaction is 5-dehydro-4-deoxy-D-glucarate + H(+) = 2,5-dioxopentanoate + CO2 + H2O. It participates in carbohydrate acid metabolism; D-glucarate degradation; 2,5-dioxopentanoate from D-glucarate: step 2/2. The chain is Probable 5-dehydro-4-deoxyglucarate dehydratase from Pseudomonas fluorescens (strain Pf0-1).